Consider the following 101-residue polypeptide: Protein S100-A4 (101 aa).

At Ala-2 the chain carries N-acetylalanine. Position 7 is an N6-acetyllysine (Lys-7). 2 EF-hand domains span residues 13–48 (VSTF…FLGK) and 50–85 (TDET…IAMM). 2 residues coordinate Ca(2+): Lys-28 and Glu-33. Position 35 is an N6-acetyllysine (Lys-35). Ca(2+) contacts are provided by Asp-63, Asn-65, Asp-67, Glu-69, and Glu-74.

Belongs to the S-100 family. In terms of assembly, homodimer. Interacts with PPFIBP1 in a calcium-dependent mode. Interacts with PGLYRP1; this complex acts as a chemoattractant that promotes lymphocyte movement. Interacts with MYH9; this interaction increases cell motility. Interacts with Annexin 2/ANXA2. Interacts with TP53; this interaction promotes TP53 degradation. Interacts with CCR5 and CXCR3. Interacts with FCGR3A; this interaction inhibits PKC-dependent phosphorylation of FCGR3A.

The protein resides in the secreted. It localises to the nucleus. Its subcellular location is the cytoplasm. Calcium-binding protein that plays a role in various cellular processes including motility, angiogenesis, cell differentiation, apoptosis, and autophagy. Increases cell motility and invasiveness by interacting with non-muscle myosin heavy chain (NMMHC) IIA/MYH9. Mechanistically, promotes filament depolymerization and increases the amount of soluble myosin-IIA, resulting in the formation of stable protrusions facilitating chemotaxis. Also modulates the pro-apoptotic function of TP53 by binding to its C-terminal transactivation domain within the nucleus and reducing its protein levels. Within the extracellular space, stimulates cytokine production including granulocyte colony-stimulating factor and CCL24 from T-lymphocytes. In addition, stimulates T-lymphocyte chemotaxis by acting as a chemoattractant complex with PGLYRP1 that promotes lymphocyte migration via CCR5 and CXCR3 receptors. This is Protein S100-A4 (S100A4) from Bos taurus (Bovine).